Consider the following 198-residue polypeptide: NADH-quinone oxidoreductase subunit C (198 aa).

It belongs to the complex I 30 kDa subunit family. NDH-1 is composed of 14 different subunits. Subunits NuoB, C, D, E, F, and G constitute the peripheral sector of the complex.

The protein resides in the cell inner membrane. It catalyses the reaction a quinone + NADH + 5 H(+)(in) = a quinol + NAD(+) + 4 H(+)(out). Functionally, NDH-1 shuttles electrons from NADH, via FMN and iron-sulfur (Fe-S) centers, to quinones in the respiratory chain. The immediate electron acceptor for the enzyme in this species is believed to be ubiquinone. Couples the redox reaction to proton translocation (for every two electrons transferred, four hydrogen ions are translocated across the cytoplasmic membrane), and thus conserves the redox energy in a proton gradient. This Herminiimonas arsenicoxydans protein is NADH-quinone oxidoreductase subunit C.